Reading from the N-terminus, the 295-residue chain is Small ribosomal subunit protein uS2 (295 aa).

A disordered region spans residues 261-295; it reads QAKKFSKTKNIDEETNTEFEQVLNDADENKNSDNA.

The protein belongs to the universal ribosomal protein uS2 family.

In Rickettsia rickettsii (strain Sheila Smith), this protein is Small ribosomal subunit protein uS2.